Here is a 167-residue protein sequence, read N- to C-terminus: N-alpha-acetyltransferase (167 aa).

In terms of domain architecture, N-acetyltransferase spans 12–167; sequence FTLRNARMDD…EDAYLMARPL (156 aa). Tyrosine 37 lines the substrate pocket. Histidine 88 provides a ligand contact to Zn(2+). Acetyl-CoA-binding positions include 92–94 and 100–105; these read IAV and RKGIAT. Zn(2+) is bound at residue glutamate 127. Acetyl-CoA is bound by residues asparagine 132 and 139-141; that span reads YEK. Tyrosine 154 is a binding site for substrate.

The protein belongs to the acetyltransferase family. ARD1 subfamily. As to quaternary structure, homodimer.

It localises to the cytoplasm. It carries out the reaction N-terminal L-alanyl-[protein] + acetyl-CoA = N-terminal N(alpha)-acetyl-L-alanyl-[protein] + CoA + H(+). The enzyme catalyses N-terminal L-seryl-[protein] + acetyl-CoA = N-terminal N(alpha)-acetyl-L-seryl-[protein] + CoA + H(+). The catalysed reaction is N-terminal L-methionyl-L-leucyl-[protein] + acetyl-CoA = N-terminal N(alpha)-acetyl-L-methionyl-L-leucyl-[protein] + CoA + H(+). It catalyses the reaction N-terminal L-methionyl-L-glutamyl-[protein] + acetyl-CoA = N-terminal N(alpha)-acetyl-L-methionyl-L-glutamyl-[protein] + CoA + H(+). Displays alpha (N-terminal) acetyltransferase activity. Catalyzes the covalent attachment of an acetyl moiety from acetyl-CoA to the free alpha-amino group at the N-terminus of a protein. NAT is able to acetylate the alpha-amino group of methionine, alanine and serine N-terminal residue substrates, however it has a preference for Ser-N-terminal substrates. The polypeptide is N-alpha-acetyltransferase (Saccharolobus solfataricus (strain ATCC 35092 / DSM 1617 / JCM 11322 / P2) (Sulfolobus solfataricus)).